The primary structure comprises 311 residues: Probable inactive peptidyl-prolyl cis-trans isomerase-like 6 (311 aa).

In terms of domain architecture, PPIase cyclophilin-type spans 145 to 308 (FLDICIDSSP…HMCRITDSGD (164 aa)).

Belongs to the cyclophilin-type PPIase family.

Its function is as follows. Probable inactive PPIase with no peptidyl-prolyl cis-trans isomerase activity. In Homo sapiens (Human), this protein is Probable inactive peptidyl-prolyl cis-trans isomerase-like 6.